A 787-amino-acid chain; its full sequence is Serine/threonine-protein kinase SCH9 (787 aa).

3 disordered regions span residues 1-82 (MVDF…QSGT), 132-172 (PQQQ…GSSQ), and 238-280 (SPVS…LFGQ). The span at 132-155 (PQQQQQQQAQQPPPEQQQSSAPYQ) shows a compositional bias: low complexity. Polar residues-rich tracts occupy residues 156-172 (NSAN…GSSQ) and 239-263 (PVSS…SNHG). In terms of domain architecture, C2 spans 182 to 354 (DKTGNKLSPA…KNNKNESEWL (173 aa)). In terms of domain architecture, Protein kinase spans 392–653 (FHFLRLLGKG…ARELKAHPFF (262 aa)). Residues 398–406 (LGKGTFGQV) and Lys421 each bind ATP. Asp518 (proton acceptor) is an active-site residue. Residues 654 to 729 (ADIDWDLLRA…VDDSTMDDHF (76 aa)) enclose the AGC-kinase C-terminal domain.

It belongs to the protein kinase superfamily. AGC Ser/Thr protein kinase family. cAMP subfamily.

The enzyme catalyses L-seryl-[protein] + ATP = O-phospho-L-seryl-[protein] + ADP + H(+). The catalysed reaction is L-threonyl-[protein] + ATP = O-phospho-L-threonyl-[protein] + ADP + H(+). Protein kinase that is part of growth control pathway which is at least partially redundant with the cAMP pathway. Plays a role in filamentous growth and virulence. Prevents hypha formation specifically under hypoxia at high CO(2) levels. Required for chlamydospore formation, distinctive morphological feature of the fungal pathogen C.albicans that can be induced to form in oxygen-limited environments and has been reported in clinical specimens. The chain is Serine/threonine-protein kinase SCH9 (SCH9) from Candida albicans (strain SC5314 / ATCC MYA-2876) (Yeast).